A 147-amino-acid chain; its full sequence is Large ribosomal subunit protein uL13 (147 aa).

The protein belongs to the universal ribosomal protein uL13 family. In terms of assembly, part of the 50S ribosomal subunit.

In terms of biological role, this protein is one of the early assembly proteins of the 50S ribosomal subunit, although it is not seen to bind rRNA by itself. It is important during the early stages of 50S assembly. The polypeptide is Large ribosomal subunit protein uL13 (Leuconostoc mesenteroides subsp. mesenteroides (strain ATCC 8293 / DSM 20343 / BCRC 11652 / CCM 1803 / JCM 6124 / NCDO 523 / NBRC 100496 / NCIMB 8023 / NCTC 12954 / NRRL B-1118 / 37Y)).